The chain runs to 581 residues: Protein phosphatase 2C 70 (581 aa).

Residues 1–7 are Extracellular-facing; that stretch reads MAMIGMN. The chain crosses the membrane as a helical span at residues 8-28; that stretch reads IIGLFMVLMLLLISLIILFAC. Residues 29-581 are Cytoplasmic-facing; sequence KPWRYFSRFR…IIYLDFDTSL (553 aa). The FHA domain occupies 208–259; sequence VKLGRVSPSDLALKDSEVSGKHAQITWNSTKFKWELVDMGSLNGTLVNSHSI. One can recognise a PPM-type phosphatase domain in the interval 304–577; it reads KIGVASDPMA…DNTSIIYLDF (274 aa). Asp346, Gly347, Asp521, and Asp568 together coordinate Mn(2+).

Association of RLK5 with kapp domain is dependent on phosphorylation of RLK5 and can be abolished by dephosphorylation. Interacts with SERK1 and CDC48A. Component of the SERK1 signaling complex, composed of KAPP, CDC48A, GRF6 or GRF7, SERK1, SERK2, SERK3/BAK1 and BRI1. Interacts with CLV1. The cofactor is Mg(2+). Mn(2+) serves as cofactor. As to expression, expressed in all tissues examined.

Its subcellular location is the cell membrane. It catalyses the reaction O-phospho-L-seryl-[protein] + H2O = L-seryl-[protein] + phosphate. It carries out the reaction O-phospho-L-threonyl-[protein] + H2O = L-threonyl-[protein] + phosphate. Its function is as follows. Dephosphorylates the Ser/Thr receptor-like kinase RLK5. May function as a signaling component in a pathway involving RLK5. Binds and dephosphorylates CLAVATA1 (CLV1). Functions as a negative regulator of the CLV1 signaling in plant development. Dephosphorylates SERK1 receptor kinase on threonine residues in the A-loop. Dephosphorylation of SERK1 controls SERK1 internalization. Component of a signaling pathway which mediates adaptation to NaCl stress. Is not a component of the SALT OVERLY SENSITIVE (SOS) pathway. This is Protein phosphatase 2C 70 from Arabidopsis thaliana (Mouse-ear cress).